The chain runs to 86 residues: Cell division topological specificity factor (86 aa).

The protein belongs to the MinE family.

In terms of biological role, prevents the cell division inhibition by proteins MinC and MinD at internal division sites while permitting inhibition at polar sites. This ensures cell division at the proper site by restricting the formation of a division septum at the midpoint of the long axis of the cell. The chain is Cell division topological specificity factor from Shewanella sediminis (strain HAW-EB3).